A 331-amino-acid chain; its full sequence is Dioxygenase swnH2 (331 aa).

Positions 1 to 11 are enriched in polar residues; that stretch reads MINSDAQSAQK. A disordered region spans residues 1–31; sequence MINSDAQSAQKQVEVEKPDEKYSAPRLLPPI. Over residues 13-23 the composition is skewed to basic and acidic residues; it reads VEVEKPDEKYS. Positions 173, 175, and 250 each coordinate Fe cation.

It belongs to the PhyH family. As to quaternary structure, homodimer. Fe cation serves as cofactor.

It participates in mycotoxin biosynthesis. Its function is as follows. Dioxygenase; part of the gene cluster that mediates the biosynthesis of swainsonine (SW), a cytotoxic fungal alkaloid and a potential cancer therapy drug. Swainsonine production occurs via a multibranched pathway and is dispensable for fungal colonization of plants and infection of insect hosts. The first step of swainsonine biosynthesis is the production of the precursor pipecolic acid (PA) via conversion of L-lysine (Lys) to 1-piperideine-6-carboxylate (P6C) by the aminotransferase swnA, the latter being further reduced to PA by the reductase swnR. PA can be converted from lysine by both the SW biosynthetic cluster and the unclustered genes such as lysine cyclodeaminase. The PKS-NRPS hybrid synthetase swnK uptakes and condensates PA and malonyl-CoA with and without skipping of the ketoreductase (KR) domain in order to produce 3 intermediates, 1-oxoindolizidine, (1S)-1-hydroxyindolizin, and (1R)-1-hydroxyindolizine; with the transisomer (1S)-1-hydroxyindolizin being predominant. The terminal thioester reductase (TE) domain of swnK is involved in reduction of the thioester bond to release the intermediate aldehydes. The oxidoreductase swnN could contribute to the reduction of 1-oxoindolizidine to (1S)-1-hydroxyindolizin and (1R)-1-hydroxyindolizine, contributing to the major route of SW production. The dioxygenase swnH2 would be responsible for the oxidization of (1R)-1-hydroxyindolizine into (1R,2S)-1,2-dihydroxyindolizine and of (1S)-1-hydroxyindolizin to yield both (1R,2S)-1,2-dihydroxyindolizine and (1S,2S)-1,2-dihydroxyindolizine. The dioxygenase swnH1 then performs the conversion of the 1,2-dihydroxyindolizine epimers to SW. The polypeptide is Dioxygenase swnH2 (Metarhizium robertsii (strain ARSEF 23 / ATCC MYA-3075) (Metarhizium anisopliae (strain ARSEF 23))).